A 419-amino-acid polypeptide reads, in one-letter code: Transcription factor 7 (419 aa).

Residues 1-12 (MPQLDSGGGGAG) are compositionally biased toward gly residues. The tract at residues 1–60 (MPQLDSGGGGAGRGDDLGAPDELLAFQDEGEEQDDKNRDSPVGPERDLAELKSSLVNESE) is CTNNB1-binding. Disordered stretches follow at residues 1-111 (MPQL…LKAP) and 134-200 (PASG…SGFY). Composition is skewed to basic and acidic residues over residues 35–50 (DKNRDSPVGPERDLAE) and 86–109 (LGREHTSQRLFPDKLPESLEDGLK). The span at 143-158 (QPQPPLHNKPGQPPHG) shows a compositional bias: pro residues. Positions 304–372 (IKKPLNAFML…LHMQLYPGWS (69 aa)) form a DNA-binding region, HMG box. Positions 374-406 (RDNYGKKKRRSREKHQESTTGGKRNAFGTYPEK) are disordered. The short motif at 379-385 (KKKRRSR) is the Nuclear localization signal element.

The protein belongs to the TCF/LEF family. As to quaternary structure, binds the armadillo repeat of CTNNB1 and forms a stable complex. Binds TLE5, TLE1, TLE2, TLE3 and TLE4. Interacts with MLLT11. Interacts with DAZAP2. Interacts (via N-terminus) with SOX13; inhibits WNT-mediated transcriptional activity. As to expression, T-cell specific. Expressed in triple negative 2 subpopulations of T-cells and both the gamma-delta and alpha-beta T-cell lineages. Expressed in Il7 receptor positive innate-like T-cells in the mesenteric lymph nodes and spleen (at protein level).

It is found in the nucleus. Transcriptional activator involved in T-cell lymphocyte differentiation. Necessary for the survival of CD4(+) CD8(+) immature thymocytes. Isoforms lacking the N-terminal CTNNB1 binding domain cannot fulfill this role. Binds to the T-lymphocyte-specific enhancer element (5'-WWCAAAG-3') found in the promoter of the CD3E gene. Represses expression of the T-cell receptor gamma gene in alpha-beta T-cell lineages. Inhibits the developmental program of IL17A effector gamma-delta T-cell subsets via regulating the transcription of T-cell lineage effector proteins. Required for the development of natural killer receptor-positive lymphoid tissue inducer T-cells. TLE1, TLE2, TLE3 and TLE4 repress transactivation mediated by TCF7 and CTNNB1. May also act as feedback transcriptional repressor of CTNNB1 and TCF7L2 target genes. This is Transcription factor 7 from Mus musculus (Mouse).